A 108-amino-acid polypeptide reads, in one-letter code: UPF0145 protein Fnod_0426 (108 aa).

It belongs to the UPF0145 family.

The protein is UPF0145 protein Fnod_0426 of Fervidobacterium nodosum (strain ATCC 35602 / DSM 5306 / Rt17-B1).